The primary structure comprises 92 residues: N(2)-fixation sustaining protein CowN (92 aa).

Belongs to the CowN family.

Its function is as follows. Is required to sustain N(2)-dependent growth in the presence of low levels of carbon monoxide (CO). Probably acts by protecting the N(2) fixation ability of the nitrogenase complex, which is inactivated in the presence of CO. The protein is N(2)-fixation sustaining protein CowN of Rhodopseudomonas palustris (strain BisA53).